Here is a 244-residue protein sequence, read N- to C-terminus: Protein-lysine methyltransferase METTL21E (244 aa).

Positions Met-1–Asp-20 are disordered. The segment covering Thr-9–Arg-18 has biased composition (basic and acidic residues). S-adenosyl-L-methionine-binding positions include Trp-69, Gly-97–Gly-99, Asp-118, Trp-149, and Ala-170.

It belongs to the methyltransferase superfamily. METTL21 family.

Protein-lysine methyltransferase. This Mus musculus (Mouse) protein is Protein-lysine methyltransferase METTL21E (Mettl21e).